A 154-amino-acid chain; its full sequence is Heat shock protein beta-3 (154 aa).

A disordered region spans residues 48–71; that stretch reads ARGAGTPQALAEDSASTEKPPGEG. A sHSP domain is found at 57–154; the sequence is LAEDSASTEK…VEVKDSLGTK (98 aa).

The protein belongs to the small heat shock protein (HSP20) family.

It localises to the cytoplasm. Its subcellular location is the nucleus. In terms of biological role, inhibitor of actin polymerization. This is Heat shock protein beta-3 (Hspb3) from Mus musculus (Mouse).